The primary structure comprises 192 residues: Imidazoleglycerol-phosphate dehydratase (192 aa).

Belongs to the imidazoleglycerol-phosphate dehydratase family.

It localises to the cytoplasm. It carries out the reaction D-erythro-1-(imidazol-4-yl)glycerol 3-phosphate = 3-(imidazol-4-yl)-2-oxopropyl phosphate + H2O. It participates in amino-acid biosynthesis; L-histidine biosynthesis; L-histidine from 5-phospho-alpha-D-ribose 1-diphosphate: step 6/9. The protein is Imidazoleglycerol-phosphate dehydratase of Staphylococcus aureus (strain JH9).